Reading from the N-terminus, the 60-residue chain is Myrmicitoxin(1)-Pr4b (60 aa).

Residues 1–23 (MKAIIFLFAVLTVVAIIIPIISG) form the signal peptide. Positions 24-33 (EPNAGPHAAS) are excised as a propeptide. At Gln59 the chain carries Glutamine amide.

It belongs to the formicidae venom clade 2 family. In terms of tissue distribution, expressed by the venom gland.

The protein resides in the secreted. Functionally, toxin that causes a rapid and irreversible paralysis when intrathoracically injected into insects (blowflies). Does not cause spontaneous nocifensive behaviors by intraplantar injection in mice. The sequence is that of Myrmicitoxin(1)-Pr4b from Pogonomyrmex rugosus (Desert harvester ant).